Reading from the N-terminus, the 255-residue chain is Flap endonuclease Xni (255 aa).

Aspartate 105 contacts Mg(2+). In terms of domain architecture, 5'-3' exonuclease spans 163–253 (QYQMLDFIAL…NLKQFRINPI (91 aa)). K(+) contacts are provided by leucine 172, alanine 173, proline 181, isoleucine 183, and isoleucine 186. The segment at 185 to 190 (GIGPKS) is interaction with DNA.

It belongs to the Xni family. Requires Mg(2+) as cofactor. The cofactor is K(+).

Has flap endonuclease activity. During DNA replication, flap endonucleases cleave the 5'-overhanging flap structure that is generated by displacement synthesis when DNA polymerase encounters the 5'-end of a downstream Okazaki fragment. In Shewanella frigidimarina (strain NCIMB 400), this protein is Flap endonuclease Xni.